A 151-amino-acid chain; its full sequence is Caveolin-3 (151 aa).

At 1 to 83 (MMTEEHTDLE…RLLSTLLGVP (83 aa)) the chain is on the cytoplasmic side. Residue K38 forms a Glycyl lysine isopeptide (Lys-Gly) (interchain with G-Cter in SUMO3) linkage. The helical intramembrane region spans 84 to 104 (LALLWGFLFACISFCHIWAVV). Over 105–151 (PCIKSYLIEIQCISHIYSLCIRTFCNPLFAALGQVCSNIKVVLRREG) the chain is Cytoplasmic.

The protein belongs to the caveolin family. In terms of assembly, homooligomer. Interacts with DYSF. Interacts with DLG1 and KCNA5; forms a ternary complex. Interacts with DAG1 (via its C-terminal); the interaction prevents binding of DAG1 with DMD. Interacts with TRIM72. Interacts with MUSK; may regulate MUSK signaling. Interacts with POPDC1. Interacts with CAVIN1, CAVIN2 and CAVIN4. Post-translationally, sumoylation with SUMO3 by PIAS4 may reduce agonist-induced internalization and desensitization of adrenergic receptor ABRD2. Expressed predominantly in muscle.

The protein resides in the golgi apparatus membrane. It is found in the cell membrane. It localises to the membrane. Its subcellular location is the caveola. The protein localises to the sarcolemma. Its function is as follows. May act as a scaffolding protein within caveolar membranes. Interacts directly with G-protein alpha subunits and can functionally regulate their activity. May also regulate voltage-gated potassium channels. Plays a role in the sarcolemma repair mechanism of both skeletal muscle and cardiomyocytes that permits rapid resealing of membranes disrupted by mechanical stress. Mediates the recruitment of CAVIN2 and CAVIN3 proteins to the caveolae. The polypeptide is Caveolin-3 (Cav3) (Rattus norvegicus (Rat)).